A 105-amino-acid chain; its full sequence is MITDEEIRKVIAPLLLSGAKMLDKHCPKCGSPLFEKDGRVFCPVCEYREKQKKEMVKGVEERLMEKLTQLANSLPDDIDELEKHLRVMEKIIEVLEKYKKLEGRR.

Belongs to the UPF0148 family.

The protein is UPF0148 protein PH0795 of Pyrococcus horikoshii (strain ATCC 700860 / DSM 12428 / JCM 9974 / NBRC 100139 / OT-3).